A 459-amino-acid chain; its full sequence is Cell division protein FtsZ (459 aa).

GTP contacts are provided by residues 25–29, 112–114, Glu-143, Arg-147, and Asp-191; these read GAGSN and GTG. Disordered regions lie at residues 383–405 and 427–459; these read DQAP…DAGE and IPER…KKRD.

The protein belongs to the FtsZ family. As to quaternary structure, homodimer. Polymerizes to form a dynamic ring structure in a strictly GTP-dependent manner. Interacts directly with several other division proteins.

The protein localises to the cytoplasm. Essential cell division protein that forms a contractile ring structure (Z ring) at the future cell division site. The regulation of the ring assembly controls the timing and the location of cell division. One of the functions of the FtsZ ring is to recruit other cell division proteins to the septum to produce a new cell wall between the dividing cells. Binds GTP and shows GTPase activity. The sequence is that of Cell division protein FtsZ from Rickettsia bellii (strain RML369-C).